Here is a 51-residue protein sequence, read N- to C-terminus: Large ribosomal subunit protein eL39 (51 aa).

The interval 32–51 (KGSVKQHPKMRHWRRNTLKK) is disordered. The segment covering 33–51 (GSVKQHPKMRHWRRNTLKK) has biased composition (basic residues).

The protein belongs to the eukaryotic ribosomal protein eL39 family.

In Methanococcus vannielii (strain ATCC 35089 / DSM 1224 / JCM 13029 / OCM 148 / SB), this protein is Large ribosomal subunit protein eL39.